The chain runs to 420 residues: Gamma-glutamyl phosphate reductase (420 aa).

Belongs to the gamma-glutamyl phosphate reductase family.

It is found in the cytoplasm. It catalyses the reaction L-glutamate 5-semialdehyde + phosphate + NADP(+) = L-glutamyl 5-phosphate + NADPH + H(+). Its pathway is amino-acid biosynthesis; L-proline biosynthesis; L-glutamate 5-semialdehyde from L-glutamate: step 2/2. Functionally, catalyzes the NADPH-dependent reduction of L-glutamate 5-phosphate into L-glutamate 5-semialdehyde and phosphate. The product spontaneously undergoes cyclization to form 1-pyrroline-5-carboxylate. In Streptococcus pneumoniae serotype 2 (strain D39 / NCTC 7466), this protein is Gamma-glutamyl phosphate reductase.